The primary structure comprises 148 residues: MTNDNPRTVIAQGTFDLLHPGHVHYLEEAAAMGDELYVIVARKSNVDHKKAPICSAAQRRDVVDALEVVDEAILGHEEDIFVPIERIDPDVIALGHDQHHDADAIEDELERRGIDCVVDRASGRESTREDEVLSTRLIIDRILERRDR.

Residues Thr14–Phe15, His19–His22, and Asp97 each bind ATP.

Belongs to the archaeal FAD synthase family. Homodimer. A divalent metal cation serves as cofactor.

The catalysed reaction is FMN + ATP + H(+) = FAD + diphosphate. Its pathway is cofactor biosynthesis; FAD biosynthesis; FAD from FMN: step 1/1. Functionally, catalyzes the transfer of the AMP portion of ATP to flavin mononucleotide (FMN) to produce flavin adenine dinucleotide (FAD) coenzyme. This Natrialba magadii (strain ATCC 43099 / DSM 3394 / CCM 3739 / CIP 104546 / IAM 13178 / JCM 8861 / NBRC 102185 / NCIMB 2190 / MS3) (Natronobacterium magadii) protein is FAD synthase.